The chain runs to 439 residues: MDHNIYLIGLNHRSAGVDVRERYALTNVEEFESGLLELGVREVMALSTCNRVEILVVCAPEITQPNILEYWAKRCCGSVSELEPNTYCHDGLNAVKHLFRVACSLDSMIVGEPQILGQLKDSYRKAVEAGAARVIINRMLHKSFFVAKRVRTETSIASSAVSISYAAVELAKKIFGELEGQRAMLIGAGEMAELAATHLLNSGVEQISIANRTYSRAEDLAKCMGGSAVSFDNLYDHLVETDIIISSTGAPHAVISAKEMKKVIKKRKYRPMFFIDIAVPRDIDPDVNGLDNVYLYDIDDLKDVVEENKSQREDEAIKANSIVEFETLSFGNWINSLDLQPTIVDLFNRSENVAQQELAKTLKRLGDVDAKTHKALETMAMSIGKKLLHEPVAFLKRRTEEEGKADEFVDLARRMFNLDNETIPADAHCGRKKNRNPEN.

Substrate is bound by residues 48–51 (TCNR), Ser-107, 112–114 (EPQ), and Gln-118. Cys-49 (nucleophile) is an active-site residue. 187–192 (GAGEMA) serves as a coordination point for NADP(+).

The protein belongs to the glutamyl-tRNA reductase family. In terms of assembly, homodimer.

It catalyses the reaction (S)-4-amino-5-oxopentanoate + tRNA(Glu) + NADP(+) = L-glutamyl-tRNA(Glu) + NADPH + H(+). Its pathway is porphyrin-containing compound metabolism; protoporphyrin-IX biosynthesis; 5-aminolevulinate from L-glutamyl-tRNA(Glu): step 1/2. Its function is as follows. Catalyzes the NADPH-dependent reduction of glutamyl-tRNA(Glu) to glutamate 1-semialdehyde (GSA). This Maridesulfovibrio salexigens (strain ATCC 14822 / DSM 2638 / NCIMB 8403 / VKM B-1763) (Desulfovibrio salexigens) protein is Glutamyl-tRNA reductase.